The following is a 388-amino-acid chain: Flap endonuclease 1 (388 aa).

The N-domain stretch occupies residues 1–104 (MGILGLSKLI…GELAKRAERR (104 aa)). Position 34 (Asp-34) interacts with Mg(2+). Residues Arg-47 and Arg-70 each contribute to the DNA site. Mg(2+) is bound by residues Asp-86, Glu-158, Glu-160, Asp-179, and Asp-181. The interval 122–253 (EIEKFNRRLV…KRAIELINSY (132 aa)) is I-domain. Glu-158 provides a ligand contact to DNA. Residues Gly-231 and Asp-233 each contribute to the DNA site. Asp-233 is a Mg(2+) binding site. Residues 336 to 344 (TQVRLDSFF) are interaction with PCNA. Positions 355–388 (AAAKRKAEEAKKSANNKKAKIGGGGGAGRGRRPK) are disordered.

Belongs to the XPG/RAD2 endonuclease family. FEN1 subfamily. In terms of assembly, interacts with PCNA. Three molecules of FEN1 bind to one PCNA trimer with each molecule binding to one PCNA monomer. PCNA stimulates the nuclease activity without altering cleavage specificity. Mg(2+) serves as cofactor. In terms of processing, phosphorylated. Phosphorylation upon DNA damage induces relocalization to the nuclear plasma.

The protein resides in the nucleus. It is found in the nucleolus. The protein localises to the nucleoplasm. It localises to the mitochondrion. Functionally, structure-specific nuclease with 5'-flap endonuclease and 5'-3' exonuclease activities involved in DNA replication and repair. During DNA replication, cleaves the 5'-overhanging flap structure that is generated by displacement synthesis when DNA polymerase encounters the 5'-end of a downstream Okazaki fragment. It enters the flap from the 5'-end and then tracks to cleave the flap base, leaving a nick for ligation. Also involved in the long patch base excision repair (LP-BER) pathway, by cleaving within the apurinic/apyrimidinic (AP) site-terminated flap. Acts as a genome stabilization factor that prevents flaps from equilibrating into structures that lead to duplications and deletions. Also possesses 5'-3' exonuclease activity on nicked or gapped double-stranded DNA, and exhibits RNase H activity. Also involved in replication and repair of rDNA and in repairing mitochondrial DNA. The protein is Flap endonuclease 1 of Drosophila willistoni (Fruit fly).